Here is a 438-residue protein sequence, read N- to C-terminus: Putative cytochrome P450 140 (438 aa).

A heme-binding site is contributed by C381.

It belongs to the cytochrome P450 family. It depends on heme as a cofactor.

The polypeptide is Putative cytochrome P450 140 (cyp140) (Mycobacterium bovis (strain ATCC BAA-935 / AF2122/97)).